The chain runs to 199 residues: Mediator of RNA polymerase II transcription subunit 7 (199 aa).

The protein belongs to the Mediator complex subunit 7 family. Component of the Mediator complex.

It localises to the nucleus. Functionally, component of the Mediator complex, a coactivator involved in the regulated transcription of nearly all RNA polymerase II-dependent genes. Mediator functions as a bridge to convey information from gene-specific regulatory proteins to the basal RNA polymerase II transcription machinery. Mediator is recruited to promoters by direct interactions with regulatory proteins and serves as a scaffold for the assembly of a functional preinitiation complex with RNA polymerase II and the general transcription factors. The chain is Mediator of RNA polymerase II transcription subunit 7 (MED7) from Eremothecium gossypii (strain ATCC 10895 / CBS 109.51 / FGSC 9923 / NRRL Y-1056) (Yeast).